Reading from the N-terminus, the 475-residue chain is Ribulose bisphosphate carboxylase large chain (475 aa).

Positions 1–2 (MS) are excised as a propeptide. Position 3 is an N-acetylproline (P3). Substrate is bound by residues T65, N123, and T173. The active-site Proton acceptor is K175. A substrate-binding site is contributed by K177. K201, D203, and E204 together coordinate Mg(2+). The residue at position 201 (K201) is an N6-carboxylysine. Residues E204, H294, R295, H327, K334, S379, G381, G403, and G404 each contribute to the substrate site. H294 functions as the Proton acceptor in the catalytic mechanism.

Belongs to the RuBisCO large chain family. Type I subfamily. In terms of assembly, heterohexadecamer of 8 large chains and 8 small chains. It depends on Mg(2+) as a cofactor. The disulfide bond which can form between Cys-247 in the large chain dimeric partners within the hexadecamer appears to be associated with oxidative stress and protein turnover. The disulfide bonds reported in 1RBO may be the result of oxidation during crystallization.

Its subcellular location is the plastid. It is found in the chloroplast. It carries out the reaction 2 (2R)-3-phosphoglycerate + 2 H(+) = D-ribulose 1,5-bisphosphate + CO2 + H2O. The catalysed reaction is D-ribulose 1,5-bisphosphate + O2 = 2-phosphoglycolate + (2R)-3-phosphoglycerate + 2 H(+). Its activity is regulated as follows. Abscisic acid (ABA) causes weak inhibition of RuBisCO catalytic activity, but more potent inhibition of RuBisCO activation. RuBisCO catalyzes two reactions: the carboxylation of D-ribulose 1,5-bisphosphate, the primary event in carbon dioxide fixation, as well as the oxidative fragmentation of the pentose substrate in the photorespiration process. Both reactions occur simultaneously and in competition at the same active site. Binds to abscisic acid (ABA) which has weakly inhibits carboxylation and more strongly inhibits enzyme activation. The sequence is that of Ribulose bisphosphate carboxylase large chain from Spinacia oleracea (Spinach).